Consider the following 298-residue polypeptide: uncharacterized protein (298 aa).

Residues Thr-43 and Tyr-105 each act as charge relay system in the active site. The Proton donor role is filled by Tyr-131. The active-site Schiff-base intermediate with substrate is Lys-159.

This sequence belongs to the DapA family. As to quaternary structure, homotetramer.

Its subcellular location is the cytoplasm. This is an uncharacterized protein from Pyrococcus furiosus (strain ATCC 43587 / DSM 3638 / JCM 8422 / Vc1).